A 307-amino-acid chain; its full sequence is UDP-N-acetylenolpyruvoylglucosamine reductase (307 aa).

The region spanning 34–198 is the FAD-binding PCMH-type domain; the sequence is LGGKADVYIT…LEATFALKKA (165 aa). R177 is a catalytic residue. S227 serves as the catalytic Proton donor. Residue E297 is part of the active site.

Belongs to the MurB family. FAD serves as cofactor.

It is found in the cytoplasm. The enzyme catalyses UDP-N-acetyl-alpha-D-muramate + NADP(+) = UDP-N-acetyl-3-O-(1-carboxyvinyl)-alpha-D-glucosamine + NADPH + H(+). The protein operates within cell wall biogenesis; peptidoglycan biosynthesis. In terms of biological role, cell wall formation. The sequence is that of UDP-N-acetylenolpyruvoylglucosamine reductase from Oceanobacillus iheyensis (strain DSM 14371 / CIP 107618 / JCM 11309 / KCTC 3954 / HTE831).